The sequence spans 532 residues: Neutral amino acid transporter A (532 aa).

Met1 is modified (N-acetylmethionine). The segment covering 1 to 10 (MEKSNETNGY) has biased composition (polar residues). Residues 1-25 (MEKSNETNGYLDSAQAGPAAGPGAP) form a disordered region. The Cytoplasmic segment spans residues 1 to 41 (MEKSNETNGYLDSAQAGPAAGPGAPGTAAGRARRCAGFLRR). The span at 14 to 25 (AQAGPAAGPGAP) shows a compositional bias: low complexity. The next 3 helical transmembrane spans lie at 42 to 62 (QALV…GAAL), 88 to 108 (MIIL…LDAS), and 119 to 139 (AYFG…AFII). Topologically, residues 140–216 (KPGSGAQTLQ…VTHEKIPIGT (77 aa)) are extracellular. Asn201 and Asn206 each carry an N-linked (GlcNAc...) asparagine glycan. A run of 6 helical transmembrane segments spans residues 217-237 (EIEG…GVAL), 257-277 (ATMV…MFLV), 298-318 (IFAS…LIYF), 328-348 (FLLG…SSAT), 373-393 (IGAT…AVFI), and 418-438 (VGAA…LEAI). Residues 500–532 (CKSEEETSPLVTHQNPAGPVASAPELESKESVL) are disordered. 3 positions are modified to phosphoserine: Ser507, Ser527, and Ser530.

This sequence belongs to the dicarboxylate/amino acid:cation symporter (DAACS) (TC 2.A.23) family. SLC1A4 subfamily. In terms of tissue distribution, expressed mostly in brain, muscle, and pancreas but detected in all tissues examined.

It is found in the membrane. The protein resides in the melanosome. The enzyme catalyses L-threonine(in) + Na(+)(in) = L-threonine(out) + Na(+)(out). The catalysed reaction is L-serine(in) + Na(+)(in) = L-serine(out) + Na(+)(out). It catalyses the reaction L-cysteine(in) + Na(+)(in) = L-cysteine(out) + Na(+)(out). It carries out the reaction L-alanine(in) + Na(+)(in) = L-alanine(out) + Na(+)(out). The enzyme catalyses L-proline(in) + Na(+)(in) = L-proline(out) + Na(+)(out). The catalysed reaction is 4-hydroxy-L-proline(in) + Na(+)(in) = 4-hydroxy-L-proline(out) + Na(+)(out). Functionally, sodium-dependent neutral amino-acid transporter that mediates transport of alanine, serine, cysteine, proline, hydroxyproline and threonine. The chain is Neutral amino acid transporter A from Homo sapiens (Human).